The chain runs to 603 residues: Elongation factor 4 (603 aa).

In terms of domain architecture, tr-type G spans 7 to 189 (SRLRNFCIIA…AVVDRIPSPK (183 aa)). Residues 19–24 (DHGKST) and 136–139 (NKVD) contribute to the GTP site.

This sequence belongs to the TRAFAC class translation factor GTPase superfamily. Classic translation factor GTPase family. LepA subfamily.

It is found in the cell inner membrane. It carries out the reaction GTP + H2O = GDP + phosphate + H(+). Required for accurate and efficient protein synthesis under certain stress conditions. May act as a fidelity factor of the translation reaction, by catalyzing a one-codon backward translocation of tRNAs on improperly translocated ribosomes. Back-translocation proceeds from a post-translocation (POST) complex to a pre-translocation (PRE) complex, thus giving elongation factor G a second chance to translocate the tRNAs correctly. Binds to ribosomes in a GTP-dependent manner. The sequence is that of Elongation factor 4 from Prochlorococcus marinus (strain NATL2A).